The sequence spans 255 residues: D-aminoacyl-tRNA deacylase (255 aa).

The protein belongs to the DtdA deacylase family. In terms of assembly, monomer. Requires Zn(2+) as cofactor.

The catalysed reaction is a D-aminoacyl-tRNA + H2O = a tRNA + a D-alpha-amino acid + H(+). It carries out the reaction glycyl-tRNA(Ala) + H2O = tRNA(Ala) + glycine + H(+). In terms of biological role, D-aminoacyl-tRNA deacylase with broad substrate specificity. By recycling D-aminoacyl-tRNA to D-amino acids and free tRNA molecules, this enzyme counteracts the toxicity associated with the formation of D-aminoacyl-tRNA entities in vivo. In Methanocaldococcus jannaschii (strain ATCC 43067 / DSM 2661 / JAL-1 / JCM 10045 / NBRC 100440) (Methanococcus jannaschii), this protein is D-aminoacyl-tRNA deacylase.